A 211-amino-acid polypeptide reads, in one-letter code: Phosphoserine phosphatase (211 aa).

The Nucleophile role is filled by aspartate 7. Positions 7 and 9 each coordinate Mg(2+). The active-site Proton donor is aspartate 9. Residues glutamate 16, arginine 52, 95 to 96, and lysine 141 contribute to the substrate site; that span reads TG. Aspartate 164 serves as a coordination point for Mg(2+). Residue asparagine 167 participates in substrate binding.

It belongs to the HAD-like hydrolase superfamily. SerB family. The cofactor is Mg(2+).

It carries out the reaction O-phospho-L-serine + H2O = L-serine + phosphate. The catalysed reaction is O-phospho-D-serine + H2O = D-serine + phosphate. The protein operates within amino-acid biosynthesis; L-serine biosynthesis; L-serine from 3-phospho-D-glycerate: step 3/3. Its function is as follows. Catalyzes the dephosphorylation of phosphoserine (P-Ser). The protein is Phosphoserine phosphatase (serB) of Halobacterium salinarum (strain ATCC 29341 / DSM 671 / R1).